A 125-amino-acid polypeptide reads, in one-letter code: Secreted RxLR effector protein RXLR-C13 (125 aa).

A signal peptide spans 1–23 (MVNSLTFTLVVVCLVRSCDGVAA). Residues 43–73 (RVLQETATANDDVKKLSTSTKVDSKLNQEIK) carry the RxLR-dEER motif. A glycan (N-linked (GlcNAc...) asparagine) is linked at N85. A helical membrane pass occupies residues 106 to 123 (FFILATILLFPIAAYMVA).

Belongs to the RxLR effector family.

Its subcellular location is the secreted. The protein resides in the host endoplasmic reticulum membrane. Its function is as follows. Secreted effector that does not suppress pattern-triggered immunity (PTI) in plant host. This Plasmopara halstedii (Downy mildew of sunflower) protein is Secreted RxLR effector protein RXLR-C13.